Consider the following 334-residue polypeptide: Chitin synthase export chaperone (334 aa).

Transmembrane regions (helical) follow at residues isoleucine 49 to methionine 69, isoleucine 85 to glycine 105, glycine 123 to tyrosine 143, leucine 159 to leucine 179, valine 185 to methionine 205, leucine 220 to phenylalanine 240, and isoleucine 244 to leucine 264.

The protein belongs to the CHS7 family.

It is found in the endoplasmic reticulum membrane. In terms of biological role, chaperone required for the export of the chitin synthase chs3 from the endoplasmic reticulum. Plays a critical role in cell wall integrity and virulence. The chain is Chitin synthase export chaperone from Fusarium oxysporum f. sp. lycopersici (strain 4287 / CBS 123668 / FGSC 9935 / NRRL 34936) (Fusarium vascular wilt of tomato).